The sequence spans 739 residues: NAD(P)H-quinone oxidoreductase subunit 5, chloroplastic (739 aa).

A run of 16 helical transmembrane segments spans residues 9-29, 39-59, 89-109, 125-145, 147-167, 185-205, 219-239, 258-278, 280-300, 327-347, 354-374, 396-416, 425-445, 542-562, 610-630, and 719-739; these read WVIP…LILI, IWAF…VQLS, IDPL…LVLI, FVYI…SNLI, IYFF…FWFT, GDFG…SLEF, NGIN…GAVA, TPIS…FLLA, LLPL…VGTI, LGYM…FHLI, ALLF…VGYS, TTFL…CFWS, WLYS…TAFY, LFPL…GISF, TLAI…YSFF, and ISSY…FFLS.

Belongs to the complex I subunit 5 family. In terms of assembly, NDH is composed of at least 16 different subunits, 5 of which are encoded in the nucleus.

The protein localises to the plastid. It localises to the chloroplast thylakoid membrane. It carries out the reaction a plastoquinone + NADH + (n+1) H(+)(in) = a plastoquinol + NAD(+) + n H(+)(out). It catalyses the reaction a plastoquinone + NADPH + (n+1) H(+)(in) = a plastoquinol + NADP(+) + n H(+)(out). Functionally, NDH shuttles electrons from NAD(P)H:plastoquinone, via FMN and iron-sulfur (Fe-S) centers, to quinones in the photosynthetic chain and possibly in a chloroplast respiratory chain. The immediate electron acceptor for the enzyme in this species is believed to be plastoquinone. Couples the redox reaction to proton translocation, and thus conserves the redox energy in a proton gradient. The chain is NAD(P)H-quinone oxidoreductase subunit 5, chloroplastic (ndhF) from Hordeum vulgare (Barley).